The primary structure comprises 99 residues: Co-chaperonin GroES (99 aa).

This sequence belongs to the GroES chaperonin family. As to quaternary structure, heptamer of 7 subunits arranged in a ring. Interacts with the chaperonin GroEL.

It localises to the cytoplasm. Its function is as follows. Together with the chaperonin GroEL, plays an essential role in assisting protein folding. The GroEL-GroES system forms a nano-cage that allows encapsulation of the non-native substrate proteins and provides a physical environment optimized to promote and accelerate protein folding. GroES binds to the apical surface of the GroEL ring, thereby capping the opening of the GroEL channel. The protein is Co-chaperonin GroES of Corynebacterium kroppenstedtii (strain DSM 44385 / JCM 11950 / CIP 105744 / CCUG 35717).